Reading from the N-terminus, the 152-residue chain is Nucleoside diphosphate kinase B (152 aa).

Positions 1–66 (MAHAERTFIA…DRPFFPGLVK (66 aa)) are interaction with AKAP13. Residues lysine 12, phenylalanine 60, arginine 88, threonine 94, arginine 105, and asparagine 115 each contribute to the ATP site. Histidine 118 functions as the Pros-phosphohistidine intermediate in the catalytic mechanism.

Belongs to the NDK family. In terms of assembly, hexamer of two different chains: An and B (A6, A5B, A4B2, A3B3, A2B4, AB5, B6). Interacts with CAPN8. Interacts with AKAP13. Interacts with ITGB1BP1 (via C-terminal domain region). Interacts with BCL2L10. The cofactor is Mg(2+).

Its subcellular location is the cytoplasm. The protein resides in the cell projection. It localises to the lamellipodium. It is found in the ruffle. The protein localises to the nucleus. The catalysed reaction is a 2'-deoxyribonucleoside 5'-diphosphate + ATP = a 2'-deoxyribonucleoside 5'-triphosphate + ADP. It carries out the reaction a ribonucleoside 5'-diphosphate + ATP = a ribonucleoside 5'-triphosphate + ADP. It catalyses the reaction ATP + protein L-histidine = ADP + protein N-phospho-L-histidine.. Major role in the synthesis of nucleoside triphosphates other than ATP. The ATP gamma phosphate is transferred to the NDP beta phosphate via a ping-pong mechanism, using a phosphorylated active-site intermediate. Negatively regulates Rho activity by interacting with AKAP13/LBC. Acts as a transcriptional activator of the MYC gene; binds DNA non-specifically. Binds to both single-stranded guanine- and cytosine-rich strands within the nuclease hypersensitive element (NHE) III(1) region of the MYC gene promoter. Does not bind to duplex NHE III(1). Has G-quadruplex (G4) DNA-binding activity, which is independent of its nucleotide-binding and kinase activity. Binds both folded and unfolded G4 with similar low nanomolar affinities. Stabilizes folded G4s regardless of whether they are prefolded or not. Exhibits histidine protein kinase activity. This chain is Nucleoside diphosphate kinase B (NME2), found in Bos taurus (Bovine).